Consider the following 303-residue polypeptide: 3-methyl-2-oxobutanoate hydroxymethyltransferase (303 aa).

The segment covering 1–10 has biased composition (polar residues); it reads MDSSGTVRNQ. The tract at residues 1–41 is disordered; it reads MDSSGTVRNQTSDDHSRPADAAGTAATLYGAPAETRSPRRS. Asp-84 and Asp-123 together coordinate Mg(2+). Residues 84-85, Asp-123, and Lys-153 contribute to the 3-methyl-2-oxobutanoate site; that span reads DS. Glu-155 is a binding site for Mg(2+). Catalysis depends on Glu-221, which acts as the Proton acceptor.

The protein belongs to the PanB family. In terms of assembly, homodecamer; pentamer of dimers. Mg(2+) is required as a cofactor.

The protein resides in the cytoplasm. It carries out the reaction 3-methyl-2-oxobutanoate + (6R)-5,10-methylene-5,6,7,8-tetrahydrofolate + H2O = 2-dehydropantoate + (6S)-5,6,7,8-tetrahydrofolate. It participates in cofactor biosynthesis; (R)-pantothenate biosynthesis; (R)-pantoate from 3-methyl-2-oxobutanoate: step 1/2. In terms of biological role, catalyzes the reversible reaction in which hydroxymethyl group from 5,10-methylenetetrahydrofolate is transferred onto alpha-ketoisovalerate to form ketopantoate. This Frankia alni (strain DSM 45986 / CECT 9034 / ACN14a) protein is 3-methyl-2-oxobutanoate hydroxymethyltransferase.